A 290-amino-acid chain; its full sequence is uncharacterized protein (290 aa).

Disordered stretches follow at residues Gln17 to Ser91 and Asp220 to Asn259. The span at Asn40–Leu50 shows a compositional bias: polar residues. Residues Ser66–Lys83 are compositionally biased toward basic residues. The span at Glu233–Gln249 shows a compositional bias: basic and acidic residues.

This is an uncharacterized protein from Saccharomyces cerevisiae (strain ATCC 204508 / S288c) (Baker's yeast).